The sequence spans 242 residues: Ribosomal RNA small subunit methyltransferase G (242 aa).

S-adenosyl-L-methionine is bound by residues Gly78, Phe83, 129–130 (AE), and Arg148.

It belongs to the methyltransferase superfamily. RNA methyltransferase RsmG family.

The protein localises to the cytoplasm. Functionally, specifically methylates the N7 position of a guanine in 16S rRNA. The protein is Ribosomal RNA small subunit methyltransferase G of Lachnoclostridium phytofermentans (strain ATCC 700394 / DSM 18823 / ISDg) (Clostridium phytofermentans).